We begin with the raw amino-acid sequence, 158 residues long: UPF0303 protein SCO2848 (158 aa).

The protein belongs to the UPF0303 family.

The protein is UPF0303 protein SCO2848 of Streptomyces coelicolor (strain ATCC BAA-471 / A3(2) / M145).